A 197-amino-acid chain; its full sequence is TATA-box-binding protein (197 aa).

2 consecutive repeat copies span residues 10-86 (IENI…VKLL) and 101-177 (IQNI…YNQL).

The protein belongs to the TBP family.

General factor that plays a role in the activation of archaeal genes transcribed by RNA polymerase. Binds specifically to the TATA box promoter element which lies close to the position of transcription initiation. In Pyrobaculum neutrophilum (strain DSM 2338 / JCM 9278 / NBRC 100436 / V24Sta) (Thermoproteus neutrophilus), this protein is TATA-box-binding protein.